The primary structure comprises 326 residues: MNMTRLLAVIGIFIATAGIAAPVSADTYPARPIQMIVPFPPGGSTDVMARVLARTLQDSLGQPVVVQNRAGAGGVIGTDATAKSAADGYTLLLSSSSAPLAVGLSLMPSIPYKVLEDLVPVSMVGDVPLVLVTNPKLKLDSLDALIAQCKARPGEVAFALNALGSQAHLLTELFQLRTGAAINMIPYKGSGPAVVDLLGGVVAADIENMPAVLEHIRSGNLRALAILSSDRSTHFPAVPTMAELGYPEFVASPWFAVMAPKGTDPKIIVLLNRHINEALQSKAVVEAFAAQGATPVIATPDQTRGFIADEIQRWAGVVRETGAKLK.

The signal sequence occupies residues 1–25; that stretch reads MNMTRLLAVIGIFIATAGIAAPVSA.

It belongs to the UPF0065 (bug) family.

Its subcellular location is the periplasm. The protein is Protein BugT (bugT) of Bordetella pertussis (strain Tohama I / ATCC BAA-589 / NCTC 13251).